The primary structure comprises 485 residues: GlcNAc-binding protein A (485 aa).

An N-terminal signal peptide occupies residues 1 to 29 (MKKQPQKTLLAIALSVVSGTAMSHGYVSA). Residues 30–200 (VENGVAEARV…SFYNVIDVKF (171 aa)) enclose the Chitin-binding type-4 domain. The region spanning 437 to 478 (AGTKVLASDGAIYQCKPFPYSGYCVQWTPTATQYQPGTGSHW) is the Chitin-binding type-3 domain.

Belongs to the GbpA family.

The protein localises to the secreted. In terms of biological role, probably interacts with GlcNAc residues. May promote attachment to both epithelial cell surfaces and chitin. This Vibrio vulnificus (strain YJ016) protein is GlcNAc-binding protein A.